A 68-amino-acid polypeptide reads, in one-letter code: Putative alpha-conotoxin Qc alphaL-1 (68 aa).

The first 21 residues, 1–21 (MGMRMMFTMFLLVVLATTVVS), serve as a signal peptide directing secretion. The propeptide occupies 22-49 (INLDHAFDGRNAAANNKATDLMARTVRR). C51 and C64 form a disulfide bridge.

It belongs to the conotoxin A superfamily. Expressed by the venom duct.

It localises to the secreted. Its function is as follows. Alpha-conotoxins act on postsynaptic membranes, they bind to the nicotinic acetylcholine receptors (nAChR) and thus inhibit them. The protein is Putative alpha-conotoxin Qc alphaL-1 of Conus quercinus (Oak cone).